We begin with the raw amino-acid sequence, 235 residues long: Urease accessory protein UreF (235 aa).

This sequence belongs to the UreF family. In terms of assembly, ureD, UreF and UreG form a complex that acts as a GTP-hydrolysis-dependent molecular chaperone, activating the urease apoprotein by helping to assemble the nickel containing metallocenter of UreC. The UreE protein probably delivers the nickel.

Its subcellular location is the cytoplasm. Functionally, required for maturation of urease via the functional incorporation of the urease nickel metallocenter. This chain is Urease accessory protein UreF, found in Haemophilus influenzae (strain ATCC 51907 / DSM 11121 / KW20 / Rd).